The chain runs to 1086 residues: DNA polymerase (1086 aa).

A disordered region spans residues 638–657; that stretch reads STTRKPVDDVEEHSECNGFT.

The protein belongs to the DNA polymerase type-B family.

It carries out the reaction DNA(n) + a 2'-deoxyribonucleoside 5'-triphosphate = DNA(n+1) + diphosphate. Functionally, replicates the viral genome. Host DNA polymerases cannot substitute for the viral enzyme in this process. The sequence is that of DNA polymerase from Noctuidae (owlet moths).